A 201-amino-acid chain; its full sequence is Adenylyl-sulfate kinase (201 aa).

G35 to S42 lines the ATP pocket. Residue S109 is the Phosphoserine intermediate of the active site.

The protein belongs to the APS kinase family.

The enzyme catalyses adenosine 5'-phosphosulfate + ATP = 3'-phosphoadenylyl sulfate + ADP + H(+). It functions in the pathway sulfur metabolism; hydrogen sulfide biosynthesis; sulfite from sulfate: step 2/3. Its function is as follows. Catalyzes the synthesis of activated sulfate. In Bacteroides thetaiotaomicron (strain ATCC 29148 / DSM 2079 / JCM 5827 / CCUG 10774 / NCTC 10582 / VPI-5482 / E50), this protein is Adenylyl-sulfate kinase.